A 648-amino-acid polypeptide reads, in one-letter code: MTPLLELKDIRRSYPAGNEQVEVLKGISLDIYAGEMVAIVGASGSGKSTLMNILGCLDKATSGTYRVAGQDVATLDADALAQLRREHFGFIFQRYHLLSHLTAEQNVEVPAVYAGLERKQRLLRAQELLQRLGLEDRTEYYPAQLSGGQQQRVSIARALMNGGQVILADEPTGALDSHSGEEVMAILHQLRDRGHTVIIVTHDPQVAAQAERVIEIRDGEIVRNPPAIEKVNVAGGTEPVVNTVSGWRQFVSGFNEALTMAWRALAANKMRTLLTMLGIIIGIASVVSIVVVGDAAKQMVLADIRSIGTNTIDVYPGKDFGDDDPQYQQALKYDDLIAIQKQPWVASATPAVSQNLRLRYNNVDVAASANGVSGDYFNVYGMTFSEGNTFNQEQLNGRAQVVVLDSNTRRQLFPHKADVVGEVILVGNMPARVIGVAEEKQSMFGSSKVLRVWLPYSTMSGRVMGQSWLNSITVRVKEGFDSAEAEQQLTRLLSLRHGKKDFFTWNMDGVLKTVEKTTRTLQLFLTLVAVISLVVGGIGVMNIMLVSVTERTREIGIRMAVGARASDVLQQFLIEAVLVCLVGGALGITLSLLIAFTLQLFLPGWEIGFSPLALLLAFLCSTATGILFGWLPARNAARLDPVDALARE.

Residues 5 to 243 (LELKDIRRSY…AGGTEPVVNT (239 aa)) enclose the ABC transporter domain. ATP is bound at residue 41 to 48 (GASGSGKS). 4 helical membrane passes run 273-293 (LLTM…VVVG), 523-543 (LFLT…VMNI), 576-596 (AVLV…LIAF), and 600-620 (LFLP…AFLC).

It belongs to the ABC transporter superfamily. Macrolide exporter (TC 3.A.1.122) family. Homodimer. Part of the tripartite efflux system MacAB-TolC, which is composed of an inner membrane transporter, MacB, a periplasmic membrane fusion protein, MacA, and an outer membrane component, TolC. The complex forms a large protein conduit and can translocate molecules across both the inner and outer membranes. Interacts with MacA.

The protein resides in the cell inner membrane. In terms of biological role, part of the tripartite efflux system MacAB-TolC. MacB is a non-canonical ABC transporter that contains transmembrane domains (TMD), which form a pore in the inner membrane, and an ATP-binding domain (NBD), which is responsible for energy generation. Confers resistance against macrolides. The polypeptide is Macrolide export ATP-binding/permease protein MacB (Shigella sonnei (strain Ss046)).